The following is a 283-amino-acid chain: Phosphatidylglycerol--prolipoprotein diacylglyceryl transferase (283 aa).

4 helical membrane-spanning segments follow: residues Ile-20–Leu-40, Leu-60–Glu-80, Ile-94–Val-114, and Leu-121–Gly-141. An a 1,2-diacyl-sn-glycero-3-phospho-(1'-sn-glycerol)-binding site is contributed by Arg-142. 3 consecutive transmembrane segments (helical) span residues Phe-183 to Tyr-203, Gly-214 to Leu-234, and Gln-248 to Leu-268.

Belongs to the Lgt family.

Its subcellular location is the cell inner membrane. The enzyme catalyses L-cysteinyl-[prolipoprotein] + a 1,2-diacyl-sn-glycero-3-phospho-(1'-sn-glycerol) = an S-1,2-diacyl-sn-glyceryl-L-cysteinyl-[prolipoprotein] + sn-glycerol 1-phosphate + H(+). The protein operates within protein modification; lipoprotein biosynthesis (diacylglyceryl transfer). Catalyzes the transfer of the diacylglyceryl group from phosphatidylglycerol to the sulfhydryl group of the N-terminal cysteine of a prolipoprotein, the first step in the formation of mature lipoproteins. This Synechocystis sp. (strain ATCC 27184 / PCC 6803 / Kazusa) protein is Phosphatidylglycerol--prolipoprotein diacylglyceryl transferase.